The primary structure comprises 900 residues: Minor teichoic acid biosynthesis protein GgaB (900 aa).

The protein belongs to the glycosyltransferase 2 family.

The protein operates within cell wall biogenesis; poly(glucopyranosyl N-acetylgalactosamine 1-phosphate) teichoic acid biosynthesis. Its function is as follows. Involved in the biosynthesis of galactosamine-containing minor teichoic acid, a non-essential cell wall polymer in B.subtilis 168. This chain is Minor teichoic acid biosynthesis protein GgaB (ggaB), found in Bacillus subtilis (strain 168).